We begin with the raw amino-acid sequence, 139 residues long: Plastocyanin (139 aa).

Residues 1–34 (MKLIAQISRSLSLALFALVLMVGSFVAVMSPAAA) form the signal peptide. Residues 35–139 (ETFTVKMGAD…GMVGKITVEG (105 aa)) form the Plastocyanin-like domain. His73, Cys123, His126, and Met131 together coordinate Cu cation.

This sequence belongs to the plastocyanin family. Requires Cu(2+) as cofactor.

The protein localises to the cellular thylakoid membrane. Functionally, participates in electron transfer between P700 and the cytochrome b6-f complex in photosystem I. The sequence is that of Plastocyanin (petE) from Leptolyngbya laminosa (Phormidium laminosum).